Here is a 476-residue protein sequence, read N- to C-terminus: Abscisic acid 8'-hydroxylase CYP707A1 (476 aa).

A helical transmembrane segment spans residues 5-25 (FEIFLYISMFVLGYLSYYFCF). Heme is bound at residue Cys422.

Belongs to the cytochrome P450 family. It depends on heme as a cofactor. Expressed in ovaries (specifically in ovules and placenta), sepals, petals and pedicels.

Its subcellular location is the membrane. It carries out the reaction 2-cis-(+)-abscisate + reduced [NADPH--hemoprotein reductase] + O2 = (+)-8'-hydroxyabscisate + oxidized [NADPH--hemoprotein reductase] + H2O + H(+). Its pathway is plant hormone degradation; abscisic acid degradation. Involved in the oxidative degradation of abscisic acid, especially in pollinated ovaries. The polypeptide is Abscisic acid 8'-hydroxylase CYP707A1 (Solanum lycopersicum (Tomato)).